A 433-amino-acid polypeptide reads, in one-letter code: Histidine--tRNA ligase (433 aa).

This sequence belongs to the class-II aminoacyl-tRNA synthetase family. As to quaternary structure, homodimer.

The protein resides in the cytoplasm. It carries out the reaction tRNA(His) + L-histidine + ATP = L-histidyl-tRNA(His) + AMP + diphosphate + H(+). In Crocosphaera subtropica (strain ATCC 51142 / BH68) (Cyanothece sp. (strain ATCC 51142)), this protein is Histidine--tRNA ligase.